The chain runs to 461 residues: Probable outer membrane lipoprotein SilC (461 aa).

The signal sequence occupies residues 1 to 17 (MFKLKLLSISTIFILAG). The N-palmitoyl cysteine moiety is linked to residue Cys-18. A lipid anchor (S-diacylglycerol cysteine) is attached at Cys-18.

This sequence belongs to the outer membrane factor (OMF) (TC 1.B.17) family.

It is found in the cell outer membrane. Component of the sil cation-efflux system that confers resistance to silver. May be part of a three-component cation/proton antiporter. The polypeptide is Probable outer membrane lipoprotein SilC (silC) (Salmonella typhimurium).